We begin with the raw amino-acid sequence, 234 residues long: MVLSLTPPSQENILASGKLAYFGAKSQVDTFTGDEQNDTFELTKDDAVLGSEIVKVNGVLQFEGQDYTAIHENGILKKIKFTQPPANGASITVEYLYLDLPLGGASELSVKEDKDKEELTVDCSYGKIQIEKGSSITLSFKDIITVGDIKLTAYFSGEILEGNTYSKYKNGASKSANIVVLAFSKEATMAYGVEPPKRIVIIRGAMPNNLEFDWSGGSKSFDLTAQSYEIIDVK.

This is an uncharacterized protein from Methanocaldococcus jannaschii (strain ATCC 43067 / DSM 2661 / JAL-1 / JCM 10045 / NBRC 100440) (Methanococcus jannaschii).